A 201-amino-acid polypeptide reads, in one-letter code: Alpha-1-acid glycoprotein 1 (201 aa).

Residues Met-1 to Ala-18 form the signal peptide. Residue Gln-19 is modified to Pyrrolidone carboxylic acid. 2 cysteine pairs are disulfide-bonded: Cys-23–Cys-165 and Cys-90–Cys-183. Asn-33 is a glycosylation site (N-linked (GlcNAc...) (complex) asparagine). N-linked (GlcNAc...) asparagine glycosylation occurs at Asn-56. A glycan (N-linked (GlcNAc...) (complex) asparagine) is linked at Asn-72. Asn-93 and Asn-103 each carry an N-linked (GlcNAc...) asparagine glycan.

It belongs to the calycin superfamily. Lipocalin family. N-glycosylated. N-glycan heterogeneity at Asn-33: Hex5HexNAc4 (minor), Hex6HexNAc5 (major) and dHex1Hex6HexNAc5 (minor). As to expression, expressed by the liver and secreted in plasma.

The protein localises to the secreted. Its function is as follows. Functions as a transport protein in the blood stream. Binds various ligands in the interior of its beta-barrel domain. Also binds synthetic drugs and influences their distribution and availability in the body. Appears to function in modulating the activity of the immune system during the acute-phase reaction. In Homo sapiens (Human), this protein is Alpha-1-acid glycoprotein 1 (ORM1).